Here is a 376-residue protein sequence, read N- to C-terminus: Erythronate-4-phosphate dehydrogenase (376 aa).

Positions 45 and 67 each coordinate substrate. NAD(+)-binding positions include 127 to 128, Asp-147, and Thr-176; that span reads QV. Arg-209 is a catalytic residue. Asp-233 contacts NAD(+). Residue Glu-238 is part of the active site. His-255 functions as the Proton donor in the catalytic mechanism. Gly-258 contributes to the NAD(+) binding site. Tyr-259 is a substrate binding site.

Belongs to the D-isomer specific 2-hydroxyacid dehydrogenase family. PdxB subfamily. As to quaternary structure, homodimer.

The protein resides in the cytoplasm. The enzyme catalyses 4-phospho-D-erythronate + NAD(+) = (R)-3-hydroxy-2-oxo-4-phosphooxybutanoate + NADH + H(+). Its pathway is cofactor biosynthesis; pyridoxine 5'-phosphate biosynthesis; pyridoxine 5'-phosphate from D-erythrose 4-phosphate: step 2/5. Functionally, catalyzes the oxidation of erythronate-4-phosphate to 3-hydroxy-2-oxo-4-phosphonooxybutanoate. This Aliivibrio fischeri (strain ATCC 700601 / ES114) (Vibrio fischeri) protein is Erythronate-4-phosphate dehydrogenase.